Reading from the N-terminus, the 87-residue chain is MVSQLFEEKAKAVNELPTKPSTDELLELYGLYKQATVGDNDKEKPGIFNMKDRYKWEAWEDLKGKSQEDAEKEYIAYVDNLIAKYSS.

The ACB domain occupies 2–87 (VSQLFEEKAK…VDNLIAKYSS (86 aa)). An acyl-CoA-binding positions include 29-33 (YGLYK), Lys-51, Lys-55, and Tyr-74.

This sequence belongs to the ACBP family.

Binds medium- and long-chain acyl-CoA esters with very high affinity and may function as an intracellular carrier of acyl-CoA esters. The sequence is that of Acyl-CoA-binding protein 2 (ACB2) from Saccharomyces pastorianus (strain ATCC 76670 / Carlsberg bottom yeast no.2 / CBS 1503 / CLIB 180 / NBRC 10610 / NRRL Y-1525) (Saaz-type lager yeast).